Consider the following 605-residue polypeptide: UvrABC system protein C (605 aa).

Residues 15–92 (GLPGCYLMKN…IQKHQPYFNI (78 aa)) enclose the GIY-YIG domain. The UVR domain maps to 197 to 232 (GHAKKDLTQRMEKAAADMAYERAGDLRDQIRYIEAT).

Belongs to the UvrC family. As to quaternary structure, interacts with UvrB in an incision complex.

Its subcellular location is the cytoplasm. Functionally, the UvrABC repair system catalyzes the recognition and processing of DNA lesions. UvrC both incises the 5' and 3' sides of the lesion. The N-terminal half is responsible for the 3' incision and the C-terminal half is responsible for the 5' incision. The protein is UvrABC system protein C of Levilactobacillus brevis (strain ATCC 367 / BCRC 12310 / CIP 105137 / JCM 1170 / LMG 11437 / NCIMB 947 / NCTC 947) (Lactobacillus brevis).